We begin with the raw amino-acid sequence, 205 residues long: MSRKRDKPYTNRHTPARISKRRRPWAPSSSEHDEIIDKPITKPPPPPALVVMGLPANCSVLELKSRFEIYGSISRIRIHKDGIGSVSYRTAESAEAAIAGSHEPSFGISIDSKKLEVVWATDPLVKWKEGVTAGEGKERTSSFSSKLLRPVMPLRKHGRSSRLASAIVNPRSDNTKGISGDGGISSPATTSEVKQRNIVTYDDIV.

The segment at 1–42 is disordered; that stretch reads MSRKRDKPYTNRHTPARISKRRRPWAPSSSEHDEIIDKPITK. Over residues 14–24 the composition is skewed to basic residues; sequence TPARISKRRRP. The segment covering 30–40 has biased composition (basic and acidic residues); sequence SEHDEIIDKPI. Positions 47–122 constitute an RRM domain; the sequence is PALVVMGLPA…KKLEVVWATD (76 aa). Residues 170–191 are disordered; it reads PRSDNTKGISGDGGISSPATTS.

This is an uncharacterized protein from Arabidopsis thaliana (Mouse-ear cress).